A 381-amino-acid polypeptide reads, in one-letter code: NF-kappa-B inhibitor-like protein 1 (381 aa).

Residues 1-34 are disordered; that stretch reads MSNPSPQVPEEEASTSVCRPKSSMASTSRRQRRE. ANK repeat units follow at residues 64 to 93 and 97 to 130; these read GQPP…DPAH and HGDT…AMGI. Disordered stretches follow at residues 129–167 and 186–294; these read GIKN…EWRQ and GDAS…RGSL. A Phosphoserine modification is found at Ser150. A compositionally biased stretch (acidic residues) spans 150-159; it reads SAEEEEEDDA. Basic and acidic residues-rich tracts occupy residues 218–228 and 238–287; these read REAEGSRRPPR and QQEE…EHPR.

As to quaternary structure, interacts with CACTIN (via N-terminal domain); the interaction occurs in a proinflammatory-independent manner. Detected in different cell types including monocytes, T-cells, B-cells and hepatocytes.

It localises to the nucleus. Its function is as follows. Involved in the regulation of innate immune response. Acts as negative regulator of Toll-like receptor and interferon-regulatory factor (IRF) signaling pathways. Contributes to the negative regulation of transcriptional activation of NF-kappa-B target genes in response to endogenous proinflammatory stimuli. The sequence is that of NF-kappa-B inhibitor-like protein 1 (NFKBIL1) from Homo sapiens (Human).